The chain runs to 217 residues: T-complex protein 10A homolog 1 (217 aa).

Residues 1-26 (MLAGQLEARDPKEGTHPEDPCPGAGA) are disordered. Positions 7-19 (EARDPKEGTHPED) are enriched in basic and acidic residues. Residues 69 to 110 (ADVHGKLRSHIDALREQNMELREKLRALQLQRWKARKKSAAS) are a coiled coil. Positions 75–96 (LRSHIDALREQNMELREKLRAL) are leucine-zipper. The span at 175-192 (ERISSWKTPPQEKRDKSL) shows a compositional bias: basic and acidic residues. The tract at residues 175-217 (ERISSWKTPPQEKRDKSLSRRRQDRRATPTGRPTPCAERRGGV) is disordered.

This sequence belongs to the TCP10 family. As to quaternary structure, self-associates (via leucine zipper). Interacts (via leucine zipper) with ZIPK/DAPK3 (via leucine zipper). Interacts with MAD4.

It localises to the nucleus. May be involved in transcriptional regulation. Has in vitro transcription inhibition activity. The polypeptide is T-complex protein 10A homolog 1 (TCP10L) (Pan troglodytes (Chimpanzee)).